Reading from the N-terminus, the 445-residue chain is Acyl-lipid (7-3)-desaturase (445 aa).

Residues 11 to 91 enclose the Cytochrome b5 heme-binding domain; that stretch reads VAELRAAEVA…MSKFFVGSLD (81 aa). Positions 50 and 73 each coordinate heme. The next 2 helical transmembrane spans lie at 126–146 and 148–168; these read YWLK…YMLL and GKTL…GLNI. The Histidine box-1 motif lies at 170-174; that stretch reads HDANH. The short motif at 205–210 is the Histidine box-2 element; that stretch reads HVVMHH. Transmembrane regions (helical) follow at residues 247–267, 283–303, and 312–332; these read ILPG…LELL, LFAP…ALPL, and ALCI…FFFI. The short motif at 380–384 is the Histidine box-3 element; that stretch reads QIEHH.

The protein belongs to the fatty acid desaturase type 1 family. Fe(2+) serves as cofactor.

The protein localises to the membrane. It catalyses the reaction a (7Z,10Z,13Z,16Z,19Z)-docosapentaenoyl-containing glycerolipid + 2 Fe(II)-[cytochrome b5] + O2 + 2 H(+) = a (4Z,7Z,10Z,13Z,16Z,19Z)-docosahexaenoyl-containing glycerolipid + 2 Fe(III)-[cytochrome b5] + 2 H2O. The catalysed reaction is a (7Z,10Z,13Z,16Z)-docosatetraenoyl-containing glycerolipid + 2 Fe(II)-[cytochrome b5] + O2 + 2 H(+) = a (4Z,7Z,10Z,13Z,16Z)-docosapentaenoyl-containing glycerolipid + 2 Fe(III)-[cytochrome b5] + 2 H2O. Its function is as follows. Fatty acid desaturase that introduces a cis double bond at the 4-position in 22-carbon polyunsaturated fatty acids that contain a Delta(7) double bond, resulting in the production of delta-4 desaturated fatty acid docosahexanoic acid (DHA). Mediates desaturation of 22:5n-3 and 22:4n-6 into 22:6n-3 and 22:5n-6 respectively. The sequence is that of Acyl-lipid (7-3)-desaturase from Diacronema lutheri (Unicellular marine alga).